Here is a 205-residue protein sequence, read N- to C-terminus: Thymidylate kinase (205 aa).

Residue 7–14 (GIDGSGKT) coordinates ATP.

This sequence belongs to the thymidylate kinase family.

It catalyses the reaction dTMP + ATP = dTDP + ADP. Its function is as follows. Phosphorylation of dTMP to form dTDP in both de novo and salvage pathways of dTTP synthesis. The polypeptide is Thymidylate kinase (Wolbachia pipientis subsp. Culex pipiens (strain wPip)).